We begin with the raw amino-acid sequence, 208 residues long: Thymidylate kinase (208 aa).

G10–T17 serves as a coordination point for ATP.

Belongs to the thymidylate kinase family.

It catalyses the reaction dTMP + ATP = dTDP + ADP. Functionally, phosphorylation of dTMP to form dTDP in both de novo and salvage pathways of dTTP synthesis. The sequence is that of Thymidylate kinase from Bacillus cereus (strain Q1).